The primary structure comprises 745 residues: 1,4-alpha-glucan branching enzyme GlgB (745 aa).

The active-site Nucleophile is the aspartate 416. The Proton donor role is filled by glutamate 469.

This sequence belongs to the glycosyl hydrolase 13 family. GlgB subfamily. As to quaternary structure, monomer.

It carries out the reaction Transfers a segment of a (1-&gt;4)-alpha-D-glucan chain to a primary hydroxy group in a similar glucan chain.. Its pathway is glycan biosynthesis; glycogen biosynthesis. In terms of biological role, catalyzes the formation of the alpha-1,6-glucosidic linkages in glycogen by scission of a 1,4-alpha-linked oligosaccharide from growing alpha-1,4-glucan chains and the subsequent attachment of the oligosaccharide to the alpha-1,6 position. The chain is 1,4-alpha-glucan branching enzyme GlgB from Shewanella sp. (strain W3-18-1).